The chain runs to 221 residues: tRNA (guanine-N(7)-)-methyltransferase (221 aa).

Residues Glu46, Asp71, and Asp120 each contribute to the S-adenosyl-L-methionine site. Asp120 is an active-site residue. Asp156 is a substrate binding site.

It belongs to the class I-like SAM-binding methyltransferase superfamily. TrmB family.

It catalyses the reaction guanosine(46) in tRNA + S-adenosyl-L-methionine = N(7)-methylguanosine(46) in tRNA + S-adenosyl-L-homocysteine. Its pathway is tRNA modification; N(7)-methylguanine-tRNA biosynthesis. Catalyzes the formation of N(7)-methylguanine at position 46 (m7G46) in tRNA. The sequence is that of tRNA (guanine-N(7)-)-methyltransferase from Cytophaga hutchinsonii (strain ATCC 33406 / DSM 1761 / CIP 103989 / NBRC 15051 / NCIMB 9469 / D465).